Consider the following 295-residue polypeptide: Protease HtpX homolog (295 aa).

A run of 2 helical transmembrane segments spans residues Ile6–Val26 and Leu40–Leu60. Position 148 (His148) interacts with Zn(2+). Residue Glu149 is part of the active site. A Zn(2+)-binding site is contributed by His152. Transmembrane regions (helical) follow at residues Leu163–Leu183 and Ile198–Phe218. Glu223 contributes to the Zn(2+) binding site.

This sequence belongs to the peptidase M48B family. Zn(2+) is required as a cofactor.

Its subcellular location is the cell inner membrane. This is Protease HtpX homolog from Leptospira interrogans serogroup Icterohaemorrhagiae serovar copenhageni (strain Fiocruz L1-130).